Consider the following 302-residue polypeptide: DNA-binding transcriptional activator HetR (302 aa).

Serine 153 is an active-site residue.

It belongs to the peptidase S48 family. As to quaternary structure, homodimer; disulfide-linked.

Its function is as follows. Might be involved in temporal and/or spatial regulation of nitrogen fixation. Dimerization is required for DNA-binding. Has both a protease and a DNA-binding activity. The protein is DNA-binding transcriptional activator HetR of Trichodesmium erythraeum (strain IMS101).